The chain runs to 509 residues: Histidine--tRNA ligase (509 aa).

The protein belongs to the class-II aminoacyl-tRNA synthetase family. In terms of assembly, homodimer.

The protein localises to the cytoplasm. The catalysed reaction is tRNA(His) + L-histidine + ATP = L-histidyl-tRNA(His) + AMP + diphosphate + H(+). In Rhodopseudomonas palustris (strain TIE-1), this protein is Histidine--tRNA ligase.